The following is a 183-amino-acid chain: ATP-dependent protease subunit HslV (183 aa).

Thr2 is an active-site residue. Residues Ala157, Cys160, and Thr163 each contribute to the Na(+) site.

It belongs to the peptidase T1B family. HslV subfamily. In terms of assembly, a double ring-shaped homohexamer of HslV is capped on each side by a ring-shaped HslU homohexamer. The assembly of the HslU/HslV complex is dependent on binding of ATP.

The protein localises to the cytoplasm. It carries out the reaction ATP-dependent cleavage of peptide bonds with broad specificity.. Its activity is regulated as follows. Allosterically activated by HslU binding. In terms of biological role, protease subunit of a proteasome-like degradation complex believed to be a general protein degrading machinery. In Marinomonas sp. (strain MWYL1), this protein is ATP-dependent protease subunit HslV.